Reading from the N-terminus, the 221-residue chain is Leucine rich adaptor protein 1-like (221 aa).

Position 1 is an N-acetylmethionine (methionine 1). The tract at residues 1 to 81 is disordered; it reads MEDGPLPDLR…SGSPRRSHPS (81 aa). 2 stretches are compositionally biased toward basic and acidic residues: residues 8–21 and 28–39; these read DLRDIELKLGRKVP and LRGEEPAPREGA. Over residues 48-75 the composition is skewed to low complexity; it reads SCSSSSSCSSFAPSVSSSSSSSPASGSP.

The sequence is that of Leucine rich adaptor protein 1-like (Lurap1l) from Rattus norvegicus (Rat).